Consider the following 292-residue polypeptide: Homoserine kinase (292 aa).

Residue 84 to 94 coordinates ATP; that stretch reads PLARGMGSSSA.

Belongs to the GHMP kinase family. Homoserine kinase subfamily.

The protein resides in the cytoplasm. It carries out the reaction L-homoserine + ATP = O-phospho-L-homoserine + ADP + H(+). Its pathway is amino-acid biosynthesis; L-threonine biosynthesis; L-threonine from L-aspartate: step 4/5. Catalyzes the ATP-dependent phosphorylation of L-homoserine to L-homoserine phosphate. This Thermus thermophilus (strain ATCC BAA-163 / DSM 7039 / HB27) protein is Homoserine kinase.